Reading from the N-terminus, the 313-residue chain is Desiccation-related protein PCC13-62 (313 aa).

A signal peptide spans 1–26 (MAQQPTFASAALVSFFLALICSCSYA).

The chain is Desiccation-related protein PCC13-62 from Craterostigma plantagineum (Blue gem).